Consider the following 276-residue polypeptide: N-alpha-acetyltransferase 60 (276 aa).

Residues 34 to 239 (VQLRFLVPDD…WTLLDHIKHY (206 aa)) form the N-acetyltransferase domain. A substrate-binding site is contributed by tyrosine 59. The active site involves tyrosine 139. A substrate-binding site is contributed by leucine 141. Residues 143-145 (LGV) and 151-156 (RNGIGS) contribute to the acetyl-CoA site. Residue histidine 180 is part of the active site. Acetyl-CoA-binding positions include asparagine 185 and 192–195 (YEKR). The interval 204 to 215 (PYYYNIRGKGKD) is required for homodimerization. Tyrosine 207 contacts substrate.

The protein belongs to the acetyltransferase family. NAA60 subfamily.

It catalyses the reaction N-terminal L-methionyl-[transmembrane protein] + acetyl-CoA = N-terminal N(alpha)-acetyl-L-methionyl-[transmembrane protein] + CoA + H(+). The enzyme catalyses L-lysyl-[protein] + acetyl-CoA = N(6)-acetyl-L-lysyl-[protein] + CoA + H(+). Functionally, displays alpha (N-terminal) acetyltransferase activity towards a range of N-terminal sequences including those starting with Met-Lys, Met-Val, Met-Ala and Met-Met. Required for normal chromosomal segregation during anaphase. In terms of biological role, shows histone acetyltransferase activity toward free histones. Its function is as follows. Does not show histone acetyltransferase activity toward free histones. The sequence is that of N-alpha-acetyltransferase 60 from Drosophila melanogaster (Fruit fly).